The primary structure comprises 202 residues: MDMSLLSFHSEGKIEAGLDEAGRGCMAGPVVAAAVILPPNYKHSLLNDSKKLTIKQRELLRQDIIRDALDYHVAEVSHTVIDQINILNATMKAMHKAVKGLKKQQPNLLLIDGNRFKQYTGIEHVCIVQGDGLYLSIAAASVLAKTHRDSLMERLAKEHPEYGWDVNAGYATEKHRLAMETHGLTPYHRTSFHFKPKQLDLF.

An RNase H type-2 domain is found at 13–202; the sequence is KIEAGLDEAG…HFKPKQLDLF (190 aa). A divalent metal cation-binding residues include D19, E20, and D112.

The protein belongs to the RNase HII family. Mn(2+) is required as a cofactor. Requires Mg(2+) as cofactor.

It localises to the cytoplasm. It catalyses the reaction Endonucleolytic cleavage to 5'-phosphomonoester.. In terms of biological role, endonuclease that specifically degrades the RNA of RNA-DNA hybrids. The protein is Ribonuclease HII of Cytophaga hutchinsonii (strain ATCC 33406 / DSM 1761 / CIP 103989 / NBRC 15051 / NCIMB 9469 / D465).